The chain runs to 282 residues: Anamorsin homolog (282 aa).

Residues 1 to 140 form an N-terminal SAM-like domain region; it reads MADLQGKAVL…KPVYEVGAAA (140 aa). Positions 141–192 are linker; that stretch reads PLKLSFAKKKQSGAAAPAAQVAEVWTIATDDFDDDDLLENDGDELLDAEDLA. Residues Cys-203, Cys-214, Cys-217, and Cys-219 each contribute to the [2Fe-2S] cluster site. The segment at 203–219 is fe-S binding site A; that stretch reads CEVGAGGKRRACKNCTC. Residues Cys-243, Cys-246, Cys-254, and Cys-257 each contribute to the [4Fe-4S] cluster site. 2 short sequence motifs (cx2C motif) span residues 243-246 and 254-257; these read CGNC and CASC. The segment at 243–257 is fe-S binding site B; sequence CGNCYLGDAFRCASC.

The protein belongs to the anamorsin family. Monomer. It depends on [2Fe-2S] cluster as a cofactor. Requires [4Fe-4S] cluster as cofactor.

The protein localises to the cytoplasm. It is found in the mitochondrion intermembrane space. Functionally, component of the cytosolic iron-sulfur (Fe-S) protein assembly (CIA) machinery. Required for the maturation of extramitochondrial Fe-S proteins. Part of an electron transfer chain functioning in an early step of cytosolic Fe-S biogenesis, facilitating the de novo assembly of a [4Fe-4S] cluster on the cytosolic Fe-S scaffold complex. Electrons are transferred from NADPH via a FAD- and FMN-containing diflavin oxidoreductase. Together with the diflavin oxidoreductase, also required for the assembly of the diferric tyrosyl radical cofactor of ribonucleotide reductase (RNR), probably by providing electrons for reduction during radical cofactor maturation in the catalytic small subunit. This Monosiga brevicollis (Choanoflagellate) protein is Anamorsin homolog.